We begin with the raw amino-acid sequence, 372 residues long: N-methyl-L-tryptophan oxidase (372 aa).

4–34 is an FAD binding site; sequence DLIIIGSGSVGAAAGYYATRAGLKVLMTDAH. The residue at position 307 (C307) is an S-8alpha-FAD cysteine.

This sequence belongs to the MSOX/MTOX family. MTOX subfamily. Monomer. FAD serves as cofactor.

The enzyme catalyses N(alpha)-methyl-L-tryptophan + O2 + H2O = L-tryptophan + formaldehyde + H2O2. Functionally, catalyzes the oxidative demethylation of N-methyl-L-tryptophan. In Salmonella heidelberg (strain SL476), this protein is N-methyl-L-tryptophan oxidase.